Here is a 379-residue protein sequence, read N- to C-terminus: MSEEENAKEAIVVDNGSGVVKAGFAGENQPCSVFPSVVAKPKTKQVIVGGAGNKDCFVGDERQQKRGVCTLSYPIKSGMIKDWDGMQKIWDYTFYNELRIETENHPVLLTEAPLNPKQNRENMCRIMFEEYDFPSMYIQIQAVLSLYSAGRTTGIVVDSGDGVTHVVPIFEGYQIPHAIEKILLAGRDLTDYMCRILKDDDYHFETTAEKETVRDIKEKLCYVADDYEAELKKAGEGGELEESYALPDGRPLKISTQRFQCPEFLFQPDLGGRECKSVHQLTYDSIMTCDLDVRKDLYANIILSGGTTMFPGLGERLYKEMKDLAPQTMKVKVIASPDRKYAVWRGGSTLAKLSTFAGMWVTKEDYAEFGESIVHRKCI.

It belongs to the actin family.

It localises to the cytoplasm. It is found in the cytoskeleton. The enzyme catalyses ATP + H2O = ADP + phosphate + H(+). Actins are highly conserved proteins that are involved in various types of cell motility and are ubiquitously expressed in all eukaryotic cells. The chain is Actin, cytoplasmic from Euplotes crassus.